Reading from the N-terminus, the 404-residue chain is Probable tRNA sulfurtransferase (404 aa).

Positions 60 to 165 constitute a THUMP domain; the sequence is HEVAESLKEI…DEAAYISYED (106 aa). ATP-binding positions include 183–184, 208–209, R265, G287, and Q296; these read ML and HF.

Belongs to the ThiI family.

The protein localises to the cytoplasm. The catalysed reaction is [ThiI sulfur-carrier protein]-S-sulfanyl-L-cysteine + a uridine in tRNA + 2 reduced [2Fe-2S]-[ferredoxin] + ATP + H(+) = [ThiI sulfur-carrier protein]-L-cysteine + a 4-thiouridine in tRNA + 2 oxidized [2Fe-2S]-[ferredoxin] + AMP + diphosphate. The enzyme catalyses [ThiS sulfur-carrier protein]-C-terminal Gly-Gly-AMP + S-sulfanyl-L-cysteinyl-[cysteine desulfurase] + AH2 = [ThiS sulfur-carrier protein]-C-terminal-Gly-aminoethanethioate + L-cysteinyl-[cysteine desulfurase] + A + AMP + 2 H(+). Its pathway is cofactor biosynthesis; thiamine diphosphate biosynthesis. Functionally, catalyzes the ATP-dependent transfer of a sulfur to tRNA to produce 4-thiouridine in position 8 of tRNAs, which functions as a near-UV photosensor. Also catalyzes the transfer of sulfur to the sulfur carrier protein ThiS, forming ThiS-thiocarboxylate. This is a step in the synthesis of thiazole, in the thiamine biosynthesis pathway. The sulfur is donated as persulfide by IscS. In Streptococcus agalactiae serotype V (strain ATCC BAA-611 / 2603 V/R), this protein is Probable tRNA sulfurtransferase.